The sequence spans 357 residues: Nitronate monooxygenase npaC (357 aa).

FMN is bound by residues Gln-167, Gly-172, and Gly-206.

Belongs to the nitronate monooxygenase family. NMO class I subfamily. The cofactor is FMN.

Its function is as follows. Nitronate monooxygenase; part of the gene cluster that mediates the biosynthesis of the deadly neurotoxic nitroalkane 3-nitropropanoic acid (3-NPA) that acts as an antimetabolite of succinate and irreversibly inhibits succinate dehydrogenase and disrupts mitochondrial oxidative phosphorylation. Catalyzes the oxidation of 3-NPA to nitrite and malonic semialdehyde. NpaC is not conserved in all fungal npa clusters and, while it is possible that it serves as a self-protection mechanism against accumulation of 3-NPA (by npaA and npaB) in the producing host, the more likely scenario may be the three enzymes representing an alternative catabolic pathway of aspartate to generate readily metabolizable nitrogen and carbon sources. This chain is Nitronate monooxygenase npaC, found in Metarhizium robertsii (strain ARSEF 23 / ATCC MYA-3075) (Metarhizium anisopliae (strain ARSEF 23)).